The chain runs to 589 residues: Cyclohexane-1,2-dione hydrolase (589 aa).

Position 52 (E52) interacts with thiamine diphosphate. Residues 400–480 are thiamine pyrophosphate binding; the sequence is NHTLPMFGGA…VITMVFTNES (81 aa). Mg(2+)-binding residues include D451 and N478.

Belongs to the TPP enzyme family. In terms of assembly, homodimer. Mg(2+) serves as cofactor. Thiamine diphosphate is required as a cofactor. It depends on FAD as a cofactor.

It catalyses the reaction cyclohexan-1,2-dione + H2O = 6-oxohexanoate + H(+). Its function is as follows. Catalyzes the ring-opening cleavage of the alicyclic alcohol cyclohexane-1,2-dione. In Azoarcus sp, this protein is Cyclohexane-1,2-dione hydrolase.